The primary structure comprises 68 residues: UPF0435 protein Sca_1453 (68 aa).

It belongs to the UPF0435 family.

This is UPF0435 protein Sca_1453 from Staphylococcus carnosus (strain TM300).